A 440-amino-acid polypeptide reads, in one-letter code: FAD-dependent monooxygenase FVEG_08293 (440 aa).

The helical transmembrane segment at 7 to 26 threads the bilayer; that stretch reads EFNVAIVGAGVAGLALAMAL. Positions 37 and 50 each coordinate FAD. Asn77 is a glycosylation site (N-linked (GlcNAc...) asparagine). An FAD-binding site is contributed by Arg122. Residues Arg203 and Tyr235 contribute to the active site. 2 residues coordinate FAD: Asp317 and Ala330.

The protein belongs to the paxM FAD-dependent monooxygenase family. Requires FAD as cofactor.

The protein localises to the membrane. FAD-dependent monooxygenase; part of the Fusarium detoxification of benzoxazolinone cluster 1 (FDB1) involved in the degradation of benzoxazolinones produced by the host plant. Maize, wheat, and rye produce the 2 benzoxazinone phytoanticipins 2,4-dihy-droxy-7-methoxy-1,4-benzoxazin-3-one (DIMBOA) and 2,4-dihydroxy-1,4-benzoxazin-3-one (DIBOA) that, due to their inherent instability once released, spontaneously degrade to the more stable corresponding benzoxazolinones, 6-methoxy-2-benzoxazolinone (MBOA) and 2-benzoxazolinone (BOA), respectively. The first step in the detoxification of benzoxazolinones involves the hydrolysis of the cyclic ester bond of benzoxazolinones by the FDB1 cluster gamma-lactamase MBL1 to aminophenols. MBL1 is able to convert BOA into 2-aminophenol (2-AP), as well as MBOA into 5-methoxy-2-aminophenol (2-AMP). The FDB2 cluster N-malonyltransferase FDB2/NAT1 then metabolizes aminophenols via N-malonylation to non-toxic malonamic acids. FDB2/NAT1 converts 2-AP into N-(2-hydroxyphenyl) malonamic acid (HPMA) and 2-AMP into N-(2-hydroxy-4-methoxyphenyl) malonamic acid (HMPMA). The duplicated dienlactone hydrolases DLH1 and DLH2 may provide redundant function for hydrolyzing the lactone moiety in the BOA molecule. The roles of the amidases an other enzymes encoded by the 2 FDB clusters have not been identified so far. The chain is FAD-dependent monooxygenase FVEG_08293 from Gibberella moniliformis (strain M3125 / FGSC 7600) (Maize ear and stalk rot fungus).